The primary structure comprises 476 residues: Membrane-bound lytic murein transglycosylase F (476 aa).

The first 15 residues, 1–15 (MRSFLLILFCVSLLT), serve as a signal peptide directing secretion. The tract at residues 16 to 258 (GCQGERVDAA…HLNEKYFAHV (243 aa)) is non-LT domain. The tract at residues 259 to 476 (KRFDYVDTRA…QSEISAAQPN (218 aa)) is LT domain. The active site involves E303. Residues 456-476 (EAQQQTAEKQSQSEISAAQPN) form a disordered region.

It in the N-terminal section; belongs to the bacterial solute-binding protein 3 family. This sequence in the C-terminal section; belongs to the transglycosylase Slt family.

The protein resides in the cell outer membrane. It catalyses the reaction Exolytic cleavage of the (1-&gt;4)-beta-glycosidic linkage between N-acetylmuramic acid (MurNAc) and N-acetylglucosamine (GlcNAc) residues in peptidoglycan, from either the reducing or the non-reducing ends of the peptidoglycan chains, with concomitant formation of a 1,6-anhydrobond in the MurNAc residue.. Murein-degrading enzyme that degrades murein glycan strands and insoluble, high-molecular weight murein sacculi, with the concomitant formation of a 1,6-anhydromuramoyl product. Lytic transglycosylases (LTs) play an integral role in the metabolism of the peptidoglycan (PG) sacculus. Their lytic action creates space within the PG sacculus to allow for its expansion as well as for the insertion of various structures such as secretion systems and flagella. The polypeptide is Membrane-bound lytic murein transglycosylase F (Shewanella loihica (strain ATCC BAA-1088 / PV-4)).